Consider the following 1099-residue polypeptide: Transmembrane protein 132D (1099 aa).

The N-terminal stretch at 1-30 (MCPSEMGTLWHHWSPVLISLAALFSKVTEG) is a signal peptide. Residues 31–915 (RGILESIQRF…LMQASKGLSD (885 aa)) are Extracellular-facing. N-linked (GlcNAc...) asparagine glycosylation occurs at N505. The tract at residues 797–858 (FGQNDANPNT…LMEGRGTTTD (62 aa)) is disordered. Low complexity predominate over residues 835 to 848 (GSQEGQYYGSSSMG). The helical transmembrane segment at 916–936 (LEIGMYALLGVFCLAILVFLI) threads the bilayer. Residues 937 to 1099 (NCVTFALKYR…NYMERLHENV (163 aa)) are Cytoplasmic-facing.

Belongs to the TMEM132 family. As to quaternary structure, interacts (via C-terminus) with NCKAP. Expressed in mature oligodendrocytes. Detected in the brain, lung, pancreas and testis. Highly expressed in mature neurons of the adult nervous system.

It is found in the membrane. Its function is as follows. Regulate neuronals morphology via inhibition of the WAVE regulatory complex (WCR), a complex that controls F-actin cytoskeletal dynamics. In Homo sapiens (Human), this protein is Transmembrane protein 132D.